We begin with the raw amino-acid sequence, 466 residues long: Delta-1 crystallin (466 aa).

This sequence belongs to the lyase 1 family. Argininosuccinate lyase subfamily. Homotetramer. Eye lens.

Functionally, delta crystallin, the principal crystallin in embryonic lens, is found only in birds and reptiles. Despite possessing the necessary catalytic residues, this protein does not function as an enzymatically active argininosuccinate lyase. In Anas platyrhynchos (Mallard), this protein is Delta-1 crystallin (ASL1).